The chain runs to 416 residues: Adipocyte plasma membrane-associated protein (416 aa).

The disordered stretch occupies residues 1-32 (MSEADGLRQRRPLRPQVVTDDDGQAPEAKDGS). At Ser-2 the chain carries N-acetylserine. Topologically, residues 2 to 40 (SEADGLRQRRPLRPQVVTDDDGQAPEAKDGSSFSGRVFR) are cytoplasmic. At Thr-19 the chain carries Phosphothreonine. A helical; Signal-anchor for type II membrane protein membrane pass occupies residues 41 to 61 (VTFLMLAVSLTVPLLGAMMLL). The Extracellular portion of the chain corresponds to 62–416 (ESPIDPQPLS…FLCRLSLQAV (355 aa)). N-linked (GlcNAc...) asparagine glycans are attached at residues Asn-160 and Asn-196.

Belongs to the strictosidine synthase family. As to expression, liver, glomerular and tubular structures of the kidney, endothelial cells, arterial wall and pancreatic islets of Langerhans (at protein level). Found ubiquitously in adult as well as in embryonic tissues. In adult tissue, the highest expression is found in the liver, placenta and heart. Found on the cell surface of monocytes. In embryonic tissue, the highest expression levels is found in the liver and the kidney.

It localises to the membrane. In terms of biological role, exhibits strong arylesterase activity with beta-naphthyl acetate and phenyl acetate. May play a role in adipocyte differentiation. This Homo sapiens (Human) protein is Adipocyte plasma membrane-associated protein (APMAP).